We begin with the raw amino-acid sequence, 185 residues long: Ribosome-recycling factor (185 aa).

The protein belongs to the RRF family.

The protein localises to the cytoplasm. Responsible for the release of ribosomes from messenger RNA at the termination of protein biosynthesis. May increase the efficiency of translation by recycling ribosomes from one round of translation to another. The sequence is that of Ribosome-recycling factor from Shewanella sp. (strain MR-4).